The following is a 183-amino-acid chain: Translocon-associated protein subunit beta (183 aa).

The signal sequence occupies residues Met-1–Ala-17. At Glu-18 to His-146 the chain is on the lumenal side. Asn-88 carries N-linked (GlcNAc...) asparagine glycosylation. A helical membrane pass occupies residues Phe-147–Leu-167. The Cytoplasmic portion of the chain corresponds to Trp-168–Asn-183.

This sequence belongs to the TRAP-beta family. Heterotetramer of TRAP-alpha, TRAP-beta, TRAP-delta and TRAP-gamma. Interacts with STING1.

Its subcellular location is the endoplasmic reticulum membrane. TRAP proteins are part of a complex whose function is to bind calcium to the ER membrane and thereby regulate the retention of ER resident proteins. This is Translocon-associated protein subunit beta (SSR2) from Bos taurus (Bovine).